The following is a 311-amino-acid chain: HPr kinase/phosphorylase (311 aa).

Catalysis depends on residues His138 and Lys159. 153–160 (GKSGVGKS) lines the ATP pocket. Residue Ser160 coordinates Mg(2+). The Proton acceptor; for phosphorylation activity. Proton donor; for dephosphorylation activity role is filled by Asp177. The segment at 201–210 (LEIRGLGIIN) is important for the catalytic mechanism of both phosphorylation and dephosphorylation. Glu202 contributes to the Mg(2+) binding site. Arg243 is an active-site residue. Residues 264–269 (PVRPGR) form an important for the catalytic mechanism of dephosphorylation region.

It belongs to the HPrK/P family. In terms of assembly, homohexamer. Mg(2+) is required as a cofactor.

It catalyses the reaction [HPr protein]-L-serine + ATP = [HPr protein]-O-phospho-L-serine + ADP + H(+). It carries out the reaction [HPr protein]-O-phospho-L-serine + phosphate + H(+) = [HPr protein]-L-serine + diphosphate. Functionally, catalyzes the ATP- as well as the pyrophosphate-dependent phosphorylation of a specific serine residue in HPr, a phosphocarrier protein of the phosphoenolpyruvate-dependent sugar phosphotransferase system (PTS). HprK/P also catalyzes the pyrophosphate-producing, inorganic phosphate-dependent dephosphorylation (phosphorolysis) of seryl-phosphorylated HPr (P-Ser-HPr). The two antagonistic activities of HprK/P are regulated by several intracellular metabolites, which change their concentration in response to the absence or presence of rapidly metabolisable carbon sources (glucose, fructose, etc.) in the growth medium. Also phosphorylates/dephosphorylates the HPr-like catabolite repression protein crh on a specific serine residue. Therefore, by controlling the phosphorylation state of HPr and crh, HPrK/P is a sensor enzyme that plays a major role in the regulation of carbon metabolism and sugar transport: it mediates carbon catabolite repression (CCR), and regulates PTS-catalyzed carbohydrate uptake and inducer exclusion. This chain is HPr kinase/phosphorylase, found in Geobacillus sp. (strain WCH70).